The sequence spans 342 residues: S-adenosylmethionine:tRNA ribosyltransferase-isomerase (342 aa).

It belongs to the QueA family. As to quaternary structure, monomer.

The protein localises to the cytoplasm. It carries out the reaction 7-aminomethyl-7-carbaguanosine(34) in tRNA + S-adenosyl-L-methionine = epoxyqueuosine(34) in tRNA + adenine + L-methionine + 2 H(+). The protein operates within tRNA modification; tRNA-queuosine biosynthesis. In terms of biological role, transfers and isomerizes the ribose moiety from AdoMet to the 7-aminomethyl group of 7-deazaguanine (preQ1-tRNA) to give epoxyqueuosine (oQ-tRNA). The protein is S-adenosylmethionine:tRNA ribosyltransferase-isomerase of Streptococcus pyogenes serotype M49 (strain NZ131).